The chain runs to 122 residues: Basic phospholipase A2 vipoxin B chain (122 aa).

7 cysteine pairs are disulfide-bonded: cysteine 26–cysteine 115, cysteine 28–cysteine 44, cysteine 43–cysteine 95, cysteine 49–cysteine 122, cysteine 50–cysteine 88, cysteine 57–cysteine 81, and cysteine 75–cysteine 86. Ca(2+) contacts are provided by tyrosine 27, glycine 29, and glycine 31. Histidine 47 is an active-site residue. Aspartate 48 contributes to the Ca(2+) binding site. Aspartate 89 is a catalytic residue.

Belongs to the phospholipase A2 family. Group II subfamily. D49 sub-subfamily. In terms of assembly, heterodimer of A (AC P04084) and B chains; non-covalently linked. The A chain (acidic) is non-toxic, and increases the toxicity of the B chain (basic). The A chain may act as factor stabilizing the complex structure and hence retaining its toxicity by preventing non-specific binding. Upon binding to the target membranes the A chain is postulated to dissociate. Ca(2+) serves as cofactor. As to expression, expressed by the venom gland.

It localises to the secreted. It catalyses the reaction a 1,2-diacyl-sn-glycero-3-phosphocholine + H2O = a 1-acyl-sn-glycero-3-phosphocholine + a fatty acid + H(+). Heterodimer: postsynaptic neurotoxin. Functionally, monomer: snake venom phospholipase A2 (PLA2) that shows hemolytic activity and inhibition of platelet aggregation. The hemolytic activity occurs only in presence of fatty acids (unsaturated fatty acids facilitate induce a strong hemolytic activity, whereas saturated fatty acids induce a slight activity). The inhibition of platelet aggregation is almost maximal when aggregation is induced by collagen, and arachidonic acid, whereas it is only of 30% when the aggregation is induced by ADP. PLA2 catalyzes the calcium-dependent hydrolysis of the 2-acyl groups in 3-sn-phosphoglycerides. The polypeptide is Basic phospholipase A2 vipoxin B chain (Vipera ammodytes meridionalis (Eastern sand viper)).